A 440-amino-acid chain; its full sequence is L-gulonolactone oxidase (440 aa).

The FAD-binding PCMH-type domain occupies 17-187 (YGCSPEMYYQ…LTVTLQCVPQ (171 aa)). His54 is subject to Pros-8alpha-FAD histidine. A helical transmembrane segment spans residues 251–273 (IGFYLLEFLLWTSTYLPRLVGWI).

It belongs to the oxygen-dependent FAD-linked oxidoreductase family. The cofactor is FAD. In terms of tissue distribution, highly expressed in liver.

The protein localises to the microsome membrane. It is found in the endoplasmic reticulum membrane. The catalysed reaction is L-gulono-1,4-lactone + O2 = L-ascorbate + H2O2 + H(+). The protein operates within cofactor biosynthesis; L-ascorbate biosynthesis via UDP-alpha-D-glucuronate pathway; L-ascorbate from UDP-alpha-D-glucuronate: step 4/4. Its function is as follows. Oxidizes L-gulono-1,4-lactone to hydrogen peroxide and L-xylo-hexulonolactone which spontaneously isomerizes to L-ascorbate. The polypeptide is L-gulonolactone oxidase (Gulo) (Mus musculus (Mouse)).